Reading from the N-terminus, the 349-residue chain is Selenide, water dikinase (349 aa).

The active site involves Cys17. ATP contacts are provided by residues Lys20 and 48-50; that span reads MAD. Asp51 provides a ligand contact to Mg(2+). ATP is bound by residues Asp68, Asp91, and 139–141; that span reads GHS. Asp91 lines the Mg(2+) pocket. Asp227 is a binding site for Mg(2+).

The protein belongs to the selenophosphate synthase 1 family. Class I subfamily. As to quaternary structure, homodimer. It depends on Mg(2+) as a cofactor.

The enzyme catalyses hydrogenselenide + ATP + H2O = selenophosphate + AMP + phosphate + 2 H(+). Functionally, synthesizes selenophosphate from selenide and ATP. The sequence is that of Selenide, water dikinase from Rhizobium meliloti (strain 1021) (Ensifer meliloti).